The primary structure comprises 68 residues: Guanine nucleotide-binding protein G(I)/G(S)/G(O) subunit gamma-5 (68 aa).

Residue Ser-2 is modified to N-acetylserine. Position 2 is a phosphoserine (Ser-2). At Cys-65 the chain carries Cysteine methyl ester. Residue Cys-65 is the site of S-geranylgeranyl cysteine attachment. A propeptide spans 66–68 (SFL) (removed in mature form).

It belongs to the G protein gamma family. G proteins are composed of 3 units, alpha, beta and gamma. In terms of tissue distribution, expressed in a variety of tissues.

The protein localises to the cell membrane. Guanine nucleotide-binding proteins (G proteins) are involved as a modulator or transducer in various transmembrane signaling systems. The beta and gamma chains are required for the GTPase activity, for replacement of GDP by GTP, and for G protein-effector interaction. This Bos taurus (Bovine) protein is Guanine nucleotide-binding protein G(I)/G(S)/G(O) subunit gamma-5 (GNG5).